A 215-amino-acid polypeptide reads, in one-letter code: MADS-box transcription factor 4 (215 aa).

An MADS-box domain is found at 1 to 61; sequence MGRGKIEIKR…GKLSDYCTPK (61 aa). Residues 89–175 form the K-box domain; sequence HKSLSAEIDR…AFRVHQQEVE (87 aa).

May interact with the K-box of MADS16. In terms of tissue distribution, highly expressed in lodicules, at intermediate levels in stamens, and weakly in carpels. Expressed in pollen.

The protein localises to the nucleus. Functionally, probable transcription factor involved in the development of floral organs. B-class protein required for normal development of lodicules and stamens (whorls 2 and 3). May function as a heterodimer with MADS16. The chain is MADS-box transcription factor 4 (MADS4) from Oryza sativa subsp. japonica (Rice).